Reading from the N-terminus, the 333-residue chain is Probable tRNA-dihydrouridine synthase 1 (333 aa).

Residues 17-19 (PMA) and Q71 each bind FMN. Catalysis depends on C102, which acts as the Proton donor. FMN contacts are provided by residues K141, 202–204 (NGD), and 226–227 (GR).

It belongs to the Dus family. The cofactor is FMN.

The catalysed reaction is a 5,6-dihydrouridine in tRNA + NAD(+) = a uridine in tRNA + NADH + H(+). It carries out the reaction a 5,6-dihydrouridine in tRNA + NADP(+) = a uridine in tRNA + NADPH + H(+). Catalyzes the synthesis of 5,6-dihydrouridine (D), a modified base found in the D-loop of most tRNAs, via the reduction of the C5-C6 double bond in target uridines. This Bacillus subtilis (strain 168) protein is Probable tRNA-dihydrouridine synthase 1 (dus1).